The following is a 404-amino-acid chain: Alkane 1-monooxygenase 1 (404 aa).

Transmembrane regions (helical) follow at residues His-25–Ser-45, Thr-47–Ile-67, Val-94–Val-114, and Ile-119–Leu-139. Fe cation-binding residues include His-143 and His-147. A helical membrane pass occupies residues Thr-151–Ile-171. His-173, His-177, and His-178 together coordinate Fe cation. Residues Val-241–Ile-261 form a helical membrane-spanning segment. 3 residues coordinate Fe cation: His-317, His-320, and His-321.

This sequence belongs to the fatty acid desaturase type 1 family. AlkB subfamily. Fe(3+) is required as a cofactor.

Its subcellular location is the cell inner membrane. The catalysed reaction is octane + 2 reduced [rubredoxin] + O2 + 2 H(+) = 2 oxidized [rubredoxin] + octan-1-ol + H2O. It functions in the pathway hydrocarbon metabolism; alkane degradation. Functionally, catalyzes the hydroxylation of n-alkanes and fatty acids in the presence of a NADH-rubredoxin reductase and rubredoxin. It preferably hydroxylases C5-C12 hydrocarbons. In Alcanivorax borkumensis (strain ATCC 700651 / DSM 11573 / NCIMB 13689 / SK2), this protein is Alkane 1-monooxygenase 1 (alkB1).